A 473-amino-acid polypeptide reads, in one-letter code: Mediator of RNA polymerase II transcription subunit 29 (473 aa).

Residues 1-12 (MSGQGPPSNLTP) are compositionally biased toward polar residues. 2 disordered regions span residues 1 to 319 (MSGQ…NEEQ) and 444 to 473 (STME…EMAE). Residues 13-50 (QQQHMIMQQQQQQQMMRQQQIQQQQLHQRQLQQQQAQQ) are compositionally biased toward low complexity. The span at 51-62 (SYQRSRTPQMQQ) shows a compositional bias: polar residues. 2 stretches are compositionally biased toward low complexity: residues 111-123 (QMMQ…NQPM) and 130-139 (VSRPGSVAPP). Composition is skewed to polar residues over residues 148–183 (TGPS…QQSH) and 255–269 (PPGS…QPGS). Composition is skewed to low complexity over residues 272 to 286 (APGS…QPPA) and 294 to 308 (AASG…AAPA).

This sequence belongs to the Mediator complex subunit 29 family. As to quaternary structure, component of the Mediator complex.

It localises to the nucleus. Component of the Mediator complex, a coactivator involved in the regulated transcription of nearly all RNA polymerase II-dependent genes. Mediator functions as a bridge to convey information from gene-specific regulatory proteins to the basal RNA polymerase II transcription machinery. Mediator is recruited to promoters by direct interactions with regulatory proteins and serves as a scaffold for the assembly of a functional preinitiation complex with RNA polymerase II and the general transcription factors. The protein is Mediator of RNA polymerase II transcription subunit 29 (mdt-29) of Caenorhabditis briggsae.